We begin with the raw amino-acid sequence, 262 residues long: Hydroxyethylthiazole kinase (262 aa).

Position 40 (methionine 40) interacts with substrate. Positions 116 and 162 each coordinate ATP. A substrate-binding site is contributed by glycine 189.

Belongs to the Thz kinase family. Mg(2+) is required as a cofactor.

The enzyme catalyses 5-(2-hydroxyethyl)-4-methylthiazole + ATP = 4-methyl-5-(2-phosphooxyethyl)-thiazole + ADP + H(+). Its pathway is cofactor biosynthesis; thiamine diphosphate biosynthesis; 4-methyl-5-(2-phosphoethyl)-thiazole from 5-(2-hydroxyethyl)-4-methylthiazole: step 1/1. In terms of biological role, catalyzes the phosphorylation of the hydroxyl group of 4-methyl-5-beta-hydroxyethylthiazole (THZ). The polypeptide is Hydroxyethylthiazole kinase (Clostridioides difficile (strain 630) (Peptoclostridium difficile)).